The following is a 107-amino-acid chain: Urease subunit beta (107 aa).

It belongs to the urease beta subunit family. As to quaternary structure, heterotrimer of UreA (gamma), UreB (beta) and UreC (alpha) subunits. Three heterotrimers associate to form the active enzyme.

Its subcellular location is the cytoplasm. The catalysed reaction is urea + 2 H2O + H(+) = hydrogencarbonate + 2 NH4(+). It functions in the pathway nitrogen metabolism; urea degradation; CO(2) and NH(3) from urea (urease route): step 1/1. The chain is Urease subunit beta from Escherichia coli.